We begin with the raw amino-acid sequence, 194 residues long: MGYYDIDDVLADGTEFPCKFQYDIPGLGYLENNPGRPITKNTKLSLPLWLARILAIVGGDEALVDEEPVPFVELLPPDMFSTKVMNAIKTDPVALDLHSINSHFFSLAIKWIMLFSEKELANVVSELLLQRAQELNHHASSLSIDLNADSTGKNSANTNIATSTFLLKLEEMEKEIYKKSHESYKDTKRWMFKK.

Belongs to the GINS3/PSF3 family. As to quaternary structure, component of the GINS complex which is a heterotetramer of SLD5, PSF1, PSF2 and PSF3.

It is found in the nucleus. Functionally, functions as part of the GINS complex which plays an essential role in the initiation of DNA replication by binding to DNA replication origins and facilitating the assembly of the DNA replication machinery. The polypeptide is DNA replication complex GINS protein PSF3 (Saccharomyces cerevisiae (strain ATCC 204508 / S288c) (Baker's yeast)).